We begin with the raw amino-acid sequence, 198 residues long: Recombination protein RecR (198 aa).

The C4-type zinc-finger motif lies at Cys-56 to Cys-71. The region spanning Lys-79–Pro-174 is the Toprim domain.

This sequence belongs to the RecR family.

May play a role in DNA repair. It seems to be involved in an RecBC-independent recombinational process of DNA repair. It may act with RecF and RecO. This chain is Recombination protein RecR, found in Erythrobacter litoralis (strain HTCC2594).